We begin with the raw amino-acid sequence, 244 residues long: Phosphoadenosine 5'-phosphosulfate reductase (244 aa).

The Nucleophile; cysteine thiosulfonate intermediate role is filled by Cys239.

It belongs to the PAPS reductase family. CysH subfamily.

The protein localises to the cytoplasm. The enzyme catalyses [thioredoxin]-disulfide + sulfite + adenosine 3',5'-bisphosphate + 2 H(+) = [thioredoxin]-dithiol + 3'-phosphoadenylyl sulfate. It functions in the pathway sulfur metabolism; hydrogen sulfide biosynthesis; sulfite from sulfate: step 3/3. Functionally, catalyzes the formation of sulfite from phosphoadenosine 5'-phosphosulfate (PAPS) using thioredoxin as an electron donor. The protein is Phosphoadenosine 5'-phosphosulfate reductase of Salmonella dublin (strain CT_02021853).